The primary structure comprises 629 residues: uncharacterized protein (629 aa).

An ABC transporter 1 domain is found at 4–255 (LKAENLYKTY…KRAEREAQAE (252 aa)). 36–43 (GPNGTGKS) serves as a coordination point for ATP. The interval 284–304 (KARIDRVETLKEQTGPQSSGS) is disordered. Residues 285–294 (ARIDRVETLK) show a composition bias toward basic and acidic residues. Polar residues predominate over residues 295-304 (EQTGPQSSGS). In terms of domain architecture, ABC transporter 2 spans 319-537 (IEAENVMIAY…EESKAKKAAP (219 aa)). Residue 351–358 (GPNGIGKT) participates in ATP binding. The disordered stretch occupies residues 530–555 (SKAKKAAPKPAAEEKTAEAEPKKKRK). The segment covering 540–550 (AAEEKTAEAEP) has biased composition (basic and acidic residues). Residues 560–629 (KDQLEWDGIE…LSLMIEELES (70 aa)) are a coiled coil.

Belongs to the ABC transporter superfamily.

This is an uncharacterized protein from Bacillus subtilis (strain 168).